We begin with the raw amino-acid sequence, 349 residues long: ATPase GET3 (349 aa).

26-33 (KGGVGKTT) contacts ATP. The active site involves aspartate 57. Residues glutamate 243 and asparagine 270 each coordinate ATP. Zn(2+)-binding residues include cysteine 280 and cysteine 283.

The protein belongs to the arsA ATPase family. As to quaternary structure, homodimer. Component of the Golgi to ER traffic (GET) complex, which is composed of GET1, GET2 and GET3. Within the complex, GET1 and GET2 form a heterotetramer which is stabilized by phosphatidylinositol binding and which binds to the GET3 homodimer. Interacts with the chloride channel protein GEF1.

Its subcellular location is the cytoplasm. The protein localises to the endoplasmic reticulum. The protein resides in the golgi apparatus. Functionally, ATPase required for the post-translational delivery of tail-anchored (TA) proteins to the endoplasmic reticulum. Recognizes and selectively binds the transmembrane domain of TA proteins in the cytosol. This complex then targets to the endoplasmic reticulum by membrane-bound receptors GET1 and GET2, where the tail-anchored protein is released for insertion. This process is regulated by ATP binding and hydrolysis. ATP binding drives the homodimer towards the closed dimer state, facilitating recognition of newly synthesized TA membrane proteins. ATP hydrolysis is required for insertion. Subsequently, the homodimer reverts towards the open dimer state, lowering its affinity for the GET1-GET2 receptor, and returning it to the cytosol to initiate a new round of targeting. Cooperates with the HDEL receptor ERD2 to mediate the ATP-dependent retrieval of resident ER proteins that contain a C-terminal H-D-E-L retention signal from the Golgi to the ER. Involved in low-level resistance to the oxyanions arsenite and arsenate, and in heat tolerance. This is ATPase GET3 from Clavispora lusitaniae (strain ATCC 42720) (Yeast).